The following is a 653-amino-acid chain: Rab proteins geranylgeranyltransferase component A 1 (653 aa).

The segment at Pro606–Glu653 is disordered. Residues Pro623–Gly646 are compositionally biased toward polar residues.

Belongs to the Rab GDI family. As to quaternary structure, monomer. Heterotrimer composed of RABGGTA, RABGGTB and CHM; within this trimer, RABGGTA and RABGGTB form the catalytic component B, while CHM (component A) mediates Rab protein binding. Can associate with the Rab GGTase dimer (RGGT or component B) prior to Rab protein binding; the association is stabilized by geranylgeranyl pyrophosphate (GGpp). The CHM:RGGT:Rab complex is destabilized by GGpp. Interacts with RAB1A, RAB1B, RAB5A, RAB7A and RAB27A and mediates their prenylation. Interacts with the non-phosphorylated forms of RAB3A, RAB3B, RAB3C, RAB3D, RAB5B, RAB5C, RAB8A, RAB8B, RAB10, RAB12, RAB35, and RAB43.

Its subcellular location is the cytoplasm. It localises to the cytosol. Functionally, substrate-binding subunit of the Rab geranylgeranyltransferase (GGTase) complex. Binds unprenylated Rab proteins and presents the substrate peptide to the catalytic component B composed of RABGGTA and RABGGTB, and remains bound to it after the geranylgeranyl transfer reaction. The component A is thought to be regenerated by transferring its prenylated Rab back to the donor membrane. Besides, a pre-formed complex consisting of CHM and the Rab GGTase dimer (RGGT or component B) can bind to and prenylate Rab proteins; this alternative pathway is proposed to be the predominant pathway for Rab protein geranylgeranylation. This chain is Rab proteins geranylgeranyltransferase component A 1 (CHM), found in Homo sapiens (Human).